The chain runs to 98 residues: Derivative of benzaldehyde biosynthesis cluster protein C (98 aa).

Belongs to the YciI family.

It functions in the pathway secondary metabolite biosynthesis. Part of the gene cluster that mediates the biosynthesis of the antibiotic 2,4-dihydroxy-3-methyl-6-(2-oxopropyl)benzaldehyde (DHMBA) and its derivatives. The direct non-reducing polyketide synthase dbaI product is 2,4-dihydroxy-3-methyl-6-(2-oxopropyl)benzaldehyde (DHMBA), produced by condensation of one acetyl-CoA starter unit with 4 malonyl-CoA units and one methylation step. The FAD-dependent monooxygenase dbaH is responsible for the synthesis of yellow pigments derived from the oxidation of DHMBA. The roles of dbaB, C, E and F have still to be determined. This chain is Derivative of benzaldehyde biosynthesis cluster protein C, found in Emericella nidulans (strain FGSC A4 / ATCC 38163 / CBS 112.46 / NRRL 194 / M139) (Aspergillus nidulans).